Here is a 441-residue protein sequence, read N- to C-terminus: Matrix extracellular phosphoglycoprotein (441 aa).

The signal sequence occupies residues 1 to 24 (MTPEGLMKMQAVSVGLLLFSMTWA). Asn82 carries N-linked (GlcNAc...) asparagine glycosylation. The segment at 137–441 (QSSPVKSKHT…SGSSSESHGD (305 aa)) is disordered. Over residues 142-156 (KSKHTKHTRQTRRST) the composition is skewed to basic residues. The segment at 178-200 (PDLLVRGDNDVPPFSGDGQHFMH) is dentonin. Residues 183–185 (RGD) carry the Cell attachment site motif. Residue Ser192 is glycosylated (O-linked (Xyl...) (chondroitin sulfate) serine). Residues 211–223 (PESSTSRPLSGSS) are compositionally biased toward polar residues. Positions 313-325 (SREKVKGGVEHAG) are enriched in basic and acidic residues. Composition is skewed to polar residues over residues 349–358 (GNQLTLTASQ) and 391–405 (GQNNLTPNKGMSQRR). Residues 424-441 (RDSSESSSSGSSSESHGD) form an ASARM motif; interaction with PHEX region. Positions 428–441 (ESSSSGSSSESHGD) are enriched in low complexity.

It belongs to the PF07175/osteoregulin family. Interacts (via ASARM motif) with PHEX; the interaction is zinc-dependent. In terms of processing, phosphorylated on serine residues in the ASARM motif; the phosphorylation is important for the inhibition of bone mineralization. Cleaved by CTSB/cathepsin B; the cleavage is blocked by metalloprotease PHEX. Expressed in osteocytes (at protein level). Expressed by chondrocytes, specifically in the hypertrophic zone of the bone growth plate (at protein level). Expressed in osteoblasts in bone (at protein level). Expressed by osteoblasts within the metaphysis (at protein level). Expressed at low levels in white fat, brown fat, testes, brain and aorta. Expressed in the craniofacial complex (at protein level). Expressed in odontoblasts, ameloblasts and in predentin during tooth development (at protein level). Expressed in the kidney (at protein level). Expressed in osteocytes in mandibular condylar cartilage and tibial cartilage (at protein level). Expressed in salivary glands.

It localises to the secreted. The protein localises to the extracellular space. The protein resides in the extracellular matrix. Functionally, regulates renal phosphate and uric acid excretion. Regulates bone mineralization by osteoblasts and cartilage mineralization by chondrocytes. Regulates the mineralization of the extracellular matrix of the craniofacial complex, such as teeth, bone and cartilage. Increases dental pulp stem cell proliferation. The sequence is that of Matrix extracellular phosphoglycoprotein from Mus musculus (Mouse).